We begin with the raw amino-acid sequence, 544 residues long: Chaperonin GroEL (544 aa).

ATP-binding positions include 30 to 33, Lys51, 87 to 91, Gly415, 481 to 483, and Asp497; these read TLGP, DGTTT, and DAL.

Belongs to the chaperonin (HSP60) family. In terms of assembly, forms a cylinder of 14 subunits composed of two heptameric rings stacked back-to-back. Interacts with the co-chaperonin GroES.

It is found in the cytoplasm. It catalyses the reaction ATP + H2O + a folded polypeptide = ADP + phosphate + an unfolded polypeptide.. Functionally, together with its co-chaperonin GroES, plays an essential role in assisting protein folding. The GroEL-GroES system forms a nano-cage that allows encapsulation of the non-native substrate proteins and provides a physical environment optimized to promote and accelerate protein folding. The protein is Chaperonin GroEL of Chlamydia felis (strain Fe/C-56) (Chlamydophila felis).